A 612-amino-acid chain; its full sequence is Sulfite reductase [NADPH] flavoprotein alpha-component (612 aa).

In terms of domain architecture, Flavodoxin-like spans 64 to 202 (VTLISASQTG…QAQQWRQQVV (139 aa)). FMN is bound by residues 70 to 75 (SQTGNA), 117 to 120 (STQG), and 153 to 162 (LGDTSYEHFC). In terms of domain architecture, FAD-binding FR-type spans 247–461 (TAPLTAQLSV…IEHNDNFRLP (215 aa)). FAD is bound by residues T335, K369, 399-402 (RLYS), 417-419 (TVG), Y423, and 432-435 (GGAS). Residues 532-533 (SR), 538-542 (KIYVQ), and D574 each bind NADP(+). Y612 contacts FAD.

This sequence belongs to the NADPH-dependent sulphite reductase flavoprotein subunit CysJ family. In the N-terminal section; belongs to the flavodoxin family. It in the C-terminal section; belongs to the flavoprotein pyridine nucleotide cytochrome reductase family. As to quaternary structure, alpha(8)-beta(8). The alpha component is a flavoprotein, the beta component is a hemoprotein. The cofactor is FAD. FMN serves as cofactor.

It catalyses the reaction hydrogen sulfide + 3 NADP(+) + 3 H2O = sulfite + 3 NADPH + 4 H(+). The protein operates within sulfur metabolism; hydrogen sulfide biosynthesis; hydrogen sulfide from sulfite (NADPH route): step 1/1. Functionally, component of the sulfite reductase complex that catalyzes the 6-electron reduction of sulfite to sulfide. This is one of several activities required for the biosynthesis of L-cysteine from sulfate. The flavoprotein component catalyzes the electron flow from NADPH -&gt; FAD -&gt; FMN to the hemoprotein component. In Yersinia pestis bv. Antiqua (strain Nepal516), this protein is Sulfite reductase [NADPH] flavoprotein alpha-component.